A 182-amino-acid chain; its full sequence is UPF0397 protein SPH_0594 (182 aa).

A run of 5 helical transmembrane segments spans residues 10 to 30 (VVAV…NIPT), 46 to 66 (LLSI…GHAI), 73 to 93 (YGLW…VGLF), 109 to 129 (ILIF…VLAP), and 148 to 168 (IVAG…LLLA).

It belongs to the UPF0397 family.

The protein localises to the cell membrane. The chain is UPF0397 protein SPH_0594 from Streptococcus pneumoniae (strain Hungary19A-6).